The following is a 208-amino-acid chain: Outer-membrane lipoprotein carrier protein (208 aa).

The first 22 residues, 1 to 22, serve as a signal peptide directing secretion; it reads MKKIFAIAALSLPLFSHFPAFA.

Belongs to the LolA family. In terms of assembly, monomer.

The protein localises to the periplasm. Functionally, participates in the translocation of lipoproteins from the inner membrane to the outer membrane. Only forms a complex with a lipoprotein if the residue after the N-terminal Cys is not an aspartate (The Asp acts as a targeting signal to indicate that the lipoprotein should stay in the inner membrane). The sequence is that of Outer-membrane lipoprotein carrier protein from Shewanella halifaxensis (strain HAW-EB4).